Consider the following 218-residue polypeptide: Ras-related protein R-Ras (218 aa).

The disordered stretch occupies residues 1–30 (MSSGAASGTGRGRPRGGGPGPRDPPPGETH). Gly residues predominate over residues 7 to 20 (SGTGRGRPRGGGPG). Residue 36–44 (GGGGVGKSA) participates in GTP binding. The Effector region motif lies at 58-66 (YDPTIEDSY). GTP is bound by residues 83–87 (DTAGQ), 142–145 (NKAD), and 172–174 (SAK). Cys-215 bears the Cysteine methyl ester mark. Cys-215 carries the S-geranylgeranyl cysteine lipid modification. Residues 216-218 (VLL) constitute a propeptide, removed in mature form.

This sequence belongs to the small GTPase superfamily. Ras family. Interacts with PLCE1. Interacts (active GTP-bound form preferentially) with RGS14. Interacts with OSBPL3. Interacts with ZDHHC19. Post-translationally, S-palmitoylated by ZDHHC19, leading to increased association with membranes and with rafts/caveolae as well as enhanced cell viability.

It localises to the cell membrane. It catalyses the reaction GTP + H2O = GDP + phosphate + H(+). In terms of biological role, GTP-binding protein with GTPase activity, likely involved in the regulation of MAPK signaling pathway and thereby controlling multiple cellular processes. Regulates the organization of the actin cytoskeleton. With OSPBL3, modulates integrin beta-1 (ITGB1) activity. This Mus musculus (Mouse) protein is Ras-related protein R-Ras (Rras).